A 132-amino-acid polypeptide reads, in one-letter code: Small ribosomal subunit protein uS8 (132 aa).

Belongs to the universal ribosomal protein uS8 family. In terms of assembly, part of the 30S ribosomal subunit. Contacts proteins S5 and S12.

In terms of biological role, one of the primary rRNA binding proteins, it binds directly to 16S rRNA central domain where it helps coordinate assembly of the platform of the 30S subunit. The sequence is that of Small ribosomal subunit protein uS8 from Xanthomonas axonopodis pv. citri (strain 306).